The sequence spans 338 residues: 4-hydroxy-3-methylbut-2-enyl diphosphate reductase (338 aa).

[4Fe-4S] cluster is bound at residue cysteine 21. Residues histidine 50 and histidine 83 each contribute to the (2E)-4-hydroxy-3-methylbut-2-enyl diphosphate site. Dimethylallyl diphosphate-binding residues include histidine 50 and histidine 83. Isopentenyl diphosphate-binding residues include histidine 50 and histidine 83. Position 105 (cysteine 105) interacts with [4Fe-4S] cluster. Residue histidine 133 coordinates (2E)-4-hydroxy-3-methylbut-2-enyl diphosphate. Histidine 133 provides a ligand contact to dimethylallyl diphosphate. Histidine 133 lines the isopentenyl diphosphate pocket. Catalysis depends on glutamate 135, which acts as the Proton donor. Position 173 (threonine 173) interacts with (2E)-4-hydroxy-3-methylbut-2-enyl diphosphate. Cysteine 203 provides a ligand contact to [4Fe-4S] cluster. (2E)-4-hydroxy-3-methylbut-2-enyl diphosphate-binding residues include serine 231, serine 232, asparagine 233, and serine 276. Dimethylallyl diphosphate contacts are provided by serine 231, serine 232, asparagine 233, and serine 276. 4 residues coordinate isopentenyl diphosphate: serine 231, serine 232, asparagine 233, and serine 276.

The protein belongs to the IspH family. Requires [4Fe-4S] cluster as cofactor.

The catalysed reaction is isopentenyl diphosphate + 2 oxidized [2Fe-2S]-[ferredoxin] + H2O = (2E)-4-hydroxy-3-methylbut-2-enyl diphosphate + 2 reduced [2Fe-2S]-[ferredoxin] + 2 H(+). It carries out the reaction dimethylallyl diphosphate + 2 oxidized [2Fe-2S]-[ferredoxin] + H2O = (2E)-4-hydroxy-3-methylbut-2-enyl diphosphate + 2 reduced [2Fe-2S]-[ferredoxin] + 2 H(+). It participates in isoprenoid biosynthesis; dimethylallyl diphosphate biosynthesis; dimethylallyl diphosphate from (2E)-4-hydroxy-3-methylbutenyl diphosphate: step 1/1. The protein operates within isoprenoid biosynthesis; isopentenyl diphosphate biosynthesis via DXP pathway; isopentenyl diphosphate from 1-deoxy-D-xylulose 5-phosphate: step 6/6. Functionally, catalyzes the conversion of 1-hydroxy-2-methyl-2-(E)-butenyl 4-diphosphate (HMBPP) into a mixture of isopentenyl diphosphate (IPP) and dimethylallyl diphosphate (DMAPP). Acts in the terminal step of the DOXP/MEP pathway for isoprenoid precursor biosynthesis. The sequence is that of 4-hydroxy-3-methylbut-2-enyl diphosphate reductase from Streptomyces coelicolor (strain ATCC BAA-471 / A3(2) / M145).